We begin with the raw amino-acid sequence, 325 residues long: Eukaryotic translation initiation factor 3 subunit I (325 aa).

4 WD repeats span residues 8 to 47, 50 to 91, 144 to 183, and 186 to 225; these read GHERSITQIKYNREGDLLFTVAKDPIVNVWYSVNGERLGT, GHTG…ALLK, CNDSKITSAVWGPLGECIIAGHEGGELNQYSAKSGEVLVN, and EHSRQINDIQLSRDMTMFVTASKDNTAKLFDSTTLEHQKT. A Phosphothreonine modification is found at Thr219. Lys264 bears the N6-acetyllysine mark. Residue Lys282 forms a Glycyl lysine isopeptide (Lys-Gly) (interchain with G-Cter in ubiquitin) linkage. One copy of the WD 5 repeat lies at 283–324; that stretch reads GHFGPINSVAFHPDGKSYSSGGEDGYVRIHYFDPQYFEFEFE. Position 308 is a phosphotyrosine (Tyr308).

This sequence belongs to the eIF-3 subunit I family. In terms of assembly, component of the eukaryotic translation initiation factor 3 (eIF-3) complex, which is composed of 13 subunits: EIF3A, EIF3B, EIF3C, EIF3D, EIF3E, EIF3F, EIF3G, EIF3H, EIF3I, EIF3J, EIF3K, EIF3L and EIF3M. The eIF-3 complex appears to include 3 stable modules: module A is composed of EIF3A, EIF3B, EIF3G and EIF3I; module B is composed of EIF3F, EIF3H, and EIF3M; and module C is composed of EIF3C, EIF3D, EIF3E, EIF3K and EIF3L. EIF3C of module C binds EIF3B of module A and EIF3H of module B, thereby linking the three modules. EIF3J is a labile subunit that binds to the eIF-3 complex via EIF3B. The eIF-3 complex interacts with RPS6KB1 under conditions of nutrient depletion. Mitogenic stimulation leads to binding and activation of a complex composed of MTOR and RPTOR, leading to phosphorylation and release of RPS6KB1 and binding of EIF4B to eIF-3. In terms of processing, phosphorylated by TGF-beta type II receptor.

The protein localises to the cytoplasm. Its function is as follows. Component of the eukaryotic translation initiation factor 3 (eIF-3) complex, which is required for several steps in the initiation of protein synthesis. The eIF-3 complex associates with the 40S ribosome and facilitates the recruitment of eIF-1, eIF-1A, eIF-2:GTP:methionyl-tRNAi and eIF-5 to form the 43S pre-initiation complex (43S PIC). The eIF-3 complex stimulates mRNA recruitment to the 43S PIC and scanning of the mRNA for AUG recognition. The eIF-3 complex is also required for disassembly and recycling of post-termination ribosomal complexes and subsequently prevents premature joining of the 40S and 60S ribosomal subunits prior to initiation. The eIF-3 complex specifically targets and initiates translation of a subset of mRNAs involved in cell proliferation, including cell cycling, differentiation and apoptosis, and uses different modes of RNA stem-loop binding to exert either translational activation or repression. The polypeptide is Eukaryotic translation initiation factor 3 subunit I (Bos taurus (Bovine)).